The sequence spans 328 residues: Probable membrane-associated kinase regulator 4 (328 aa).

The tract at residues 213–253 (GQIKTERPKKQSNGSVSGSHRRSFSVSMRRQAAKSSNNKSS) is disordered. Residues 223–240 (QSNGSVSGSHRRSFSVSM) show a composition bias toward polar residues.

It is found in the cell membrane. The protein is Probable membrane-associated kinase regulator 4 (MAKR4) of Arabidopsis thaliana (Mouse-ear cress).